The primary structure comprises 117 residues: Large ribosomal subunit protein bL20 (117 aa).

It belongs to the bacterial ribosomal protein bL20 family.

Functionally, binds directly to 23S ribosomal RNA and is necessary for the in vitro assembly process of the 50S ribosomal subunit. It is not involved in the protein synthesizing functions of that subunit. This is Large ribosomal subunit protein bL20 from Rickettsia felis (strain ATCC VR-1525 / URRWXCal2) (Rickettsia azadi).